Consider the following 217-residue polypeptide: Small ribosomal subunit protein uS3c (217 aa).

The KH type-2 domain occupies 39-109; it reads IRSCIEKQLH…QIRINLIEIT (71 aa).

The protein belongs to the universal ribosomal protein uS3 family. Part of the 30S ribosomal subunit.

It localises to the plastid. The protein resides in the chloroplast. The polypeptide is Small ribosomal subunit protein uS3c (rps3) (Gracilaria tenuistipitata var. liui (Red alga)).